Reading from the N-terminus, the 148-residue chain is Ribonuclease H (148 aa).

An RNase H type-1 domain is found at Thr-2–Leu-143. The Mg(2+) site is built by Asp-11, Glu-49, Asp-71, and Asp-135.

This sequence belongs to the RNase H family. As to quaternary structure, monomer. It depends on Mg(2+) as a cofactor.

It is found in the cytoplasm. It carries out the reaction Endonucleolytic cleavage to 5'-phosphomonoester.. Endonuclease that specifically degrades the RNA of RNA-DNA hybrids. This Thiobacillus denitrificans (strain ATCC 25259 / T1) protein is Ribonuclease H.